A 372-amino-acid chain; its full sequence is Enolase (372 aa).

Substrate contacts are provided by H95 and E104. The Proton donor role is filled by E147. Mg(2+) is bound by residues D182, E232, and D257. 2 residues coordinate substrate: E232 and D257. The Proton acceptor role is filled by K282. Residues 309–312 and K333 each bind substrate; that span reads SHRS.

The protein belongs to the enolase family. As to quaternary structure, homodimer. The cofactor is Mg(2+).

The protein localises to the cytoplasm. It carries out the reaction (2R)-2-phosphoglycerate = phosphoenolpyruvate + H2O. It functions in the pathway carbohydrate degradation; glycolysis; pyruvate from D-glyceraldehyde 3-phosphate: step 4/5. The protein is Enolase (ENO) of Chlamydomonas reinhardtii (Chlamydomonas smithii).